A 181-amino-acid polypeptide reads, in one-letter code: tRNA (cytidine(56)-2'-O)-methyltransferase (181 aa).

S-adenosyl-L-methionine is bound by residues Leu88, 115-119 (GGEKV), and 133-140 (IGNQPHSE).

The protein belongs to the aTrm56 family. As to quaternary structure, homodimer.

Its subcellular location is the cytoplasm. It carries out the reaction cytidine(56) in tRNA + S-adenosyl-L-methionine = 2'-O-methylcytidine(56) in tRNA + S-adenosyl-L-homocysteine + H(+). Specifically catalyzes the AdoMet-dependent 2'-O-ribose methylation of cytidine at position 56 in tRNAs. This chain is tRNA (cytidine(56)-2'-O)-methyltransferase, found in Thermofilum pendens (strain DSM 2475 / Hrk 5).